The chain runs to 360 residues: Photosystem II protein D1 (360 aa).

3 helical membrane passes run 30–47 (YVGW…AAAA), 119–134 (HFLI…QWEL), and 143–157 (WICV…AAFA). Histidine 119 serves as a coordination point for chlorophyll a. Tyrosine 127 provides a ligand contact to pheophytin a. [CaMn4O5] cluster contacts are provided by aspartate 171 and glutamate 190. The chain crosses the membrane as a helical span at residues 198 to 219 (FHMAGVAGMFGGSLFSAMHGSL). Residue histidine 199 coordinates chlorophyll a. A quinone contacts are provided by residues histidine 216 and 265 to 266 (SF). A Fe cation-binding site is contributed by histidine 216. Histidine 273 contacts Fe cation. The helical transmembrane segment at 275-289 (FLAVFPVVCVWLTSM) threads the bilayer. Positions 333, 334, 343, and 345 each coordinate [CaMn4O5] cluster. Positions 346 to 360 (AAESTTVALSAPAIG) are excised as a propeptide.

The protein belongs to the reaction center PufL/M/PsbA/D family. PSII is composed of 1 copy each of membrane proteins PsbA, PsbB, PsbC, PsbD, PsbE, PsbF, PsbH, PsbI, PsbJ, PsbK, PsbL, PsbM, PsbT, PsbX, PsbY, Psb30/Ycf12, peripheral proteins PsbO, CyanoQ (PsbQ), PsbU, PsbV and a large number of cofactors. It forms dimeric complexes. It depends on The D1/D2 heterodimer binds P680, chlorophylls that are the primary electron donor of PSII, and subsequent electron acceptors. It shares a non-heme iron and each subunit binds pheophytin, quinone, additional chlorophylls, carotenoids and lipids. D1 provides most of the ligands for the Mn4-Ca-O5 cluster of the oxygen-evolving complex (OEC). There is also a Cl(-1) ion associated with D1 and D2, which is required for oxygen evolution. The PSII complex binds additional chlorophylls, carotenoids and specific lipids. as a cofactor. Tyr-162 forms a radical intermediate that is referred to as redox-active TyrZ, YZ or Y-Z. Post-translationally, C-terminally processed by CtpA; processing is essential to allow assembly of the oxygen-evolving complex and thus photosynthetic growth.

The protein resides in the cellular thylakoid membrane. It carries out the reaction 2 a plastoquinone + 4 hnu + 2 H2O = 2 a plastoquinol + O2. Functionally, photosystem II (PSII) is a light-driven water:plastoquinone oxidoreductase that uses light energy to abstract electrons from H(2)O, generating O(2) and a proton gradient subsequently used for ATP formation. It consists of a core antenna complex that captures photons, and an electron transfer chain that converts photonic excitation into a charge separation. The D1/D2 (PsbA/PsbD) reaction center heterodimer binds P680, the primary electron donor of PSII as well as several subsequent electron acceptors. The protein is Photosystem II protein D1 of Prochlorococcus marinus (strain MIT 9312).